A 756-amino-acid polypeptide reads, in one-letter code: Zinc finger and BTB domain-containing protein 49 (756 aa).

Positions 25-91 constitute a BTB domain; it reads CDCMLVVRGV…MYTSRLDLNQ (67 aa). 3 disordered regions span residues 176-197, 226-290, and 311-379; these read APSA…GGSC, PSQV…LSEP, and SQQS…PSQA. Polar residues predominate over residues 226 to 242; that stretch reads PSQVPATQQPLTRSAST. Composition is skewed to basic and acidic residues over residues 319–341 and 348–365; these read SHPE…DAVE and AEEK…REEE. C2H2-type zinc fingers lie at residues 386–408, 414–436, 442–464, 470–492, 498–520, 526–548, and 554–576; these read YACE…KRSH, FECN…LRRH, YICE…IIIH, HLCD…KKTH, FTCD…RVRH, YSCP…VRTH, and YSCE…KRMH.

This sequence belongs to the krueppel C2H2-type zinc-finger protein family. As to quaternary structure, interacts with EP300, KAT5/Tip60 and ZBTB17. The interaction with EP300 is direct and leads to synergistic induction of CDKN1A. On the CDKN1A promoter, forms a complex with ZBTB17; this interaction leads to additive CDKN1A transactivation. The interaction with ZBTB17 may block ZBTB17 repressor activity. Widely expressed, with highest levels in white adipose tissue and kidney, intermediate levels in brain, liver and heart, and lowest levels in spleen, brown adipose tissue and muscle.

It is found in the cytoplasm. The protein localises to the nucleus. Transcription factor. Inhibits cell proliferation by activating either CDKN1A/p21 transcription or RB1 transcription. The polypeptide is Zinc finger and BTB domain-containing protein 49 (Zbtb49) (Mus musculus (Mouse)).